Here is a 220-residue protein sequence, read N- to C-terminus: Ribonuclease HII (220 aa).

The RNase H type-2 domain maps to 16–216 (PVFAGIDEAG…VRPNPAAEEQ (201 aa)). 3 residues coordinate a divalent metal cation: aspartate 22, glutamate 23, and aspartate 114.

The protein belongs to the RNase HII family. Requires Mn(2+) as cofactor. Mg(2+) serves as cofactor.

It localises to the cytoplasm. It catalyses the reaction Endonucleolytic cleavage to 5'-phosphomonoester.. In terms of biological role, endonuclease that specifically degrades the RNA of RNA-DNA hybrids. The protein is Ribonuclease HII of Nitratidesulfovibrio vulgaris (strain ATCC 29579 / DSM 644 / CCUG 34227 / NCIMB 8303 / VKM B-1760 / Hildenborough) (Desulfovibrio vulgaris).